Reading from the N-terminus, the 262-residue chain is Aminoglycoside (3'') (9) adenylyltransferase (262 aa).

Residues 1 to 157 (MTLSIPPSIQ…ERAERLFTPA (157 aa)) are adenylyltransferase domain. Residues Ser-36, Ser-46, and Asp-47 each contribute to the ATP site. Mg(2+) contacts are provided by Asp-47, Asp-49, and Glu-87. The active-site Proton acceptor is the Glu-87. Residue Asp-130 coordinates ATP. The tract at residues 158–262 (PAAQLLKALR…AKAHIPTQFT (105 aa)) is helical domain. Streptomycin-binding positions include 173–178 (WQSTAD) and His-185. Residues Lys-205 and Tyr-231 each coordinate ATP.

Monomer.

It carries out the reaction streptomycin + ATP = 3''-O-adenylylstreptomycin + diphosphate. The enzyme catalyses spectinomycin + ATP = 9-O-adenylylspectinomycin + diphosphate. Its function is as follows. Mediates bacterial resistance to the antibiotics streptomycin and spectinomycin, does not confer resistance to kanamycin. Binds ATP first, then antibiotic. The sequence is that of Aminoglycoside (3'') (9) adenylyltransferase (aadA) from Salmonella typhimurium (strain LT2 / SGSC1412 / ATCC 700720).